A 485-amino-acid chain; its full sequence is WAS/WASL-interacting protein family member 3 (485 aa).

Residues 1 to 41 (MPVPPPPPPPPPPPPPPPPPLGAPPPPPLGAPPPPPPPGPP) are compositionally biased toward pro residues. A disordered region spans residues 1–485 (MPVPPPPPPP…QLSLKALPVR (485 aa)). Short sequence motifs (profilin-binding motif) lie at residues 3 to 8 (VPPPPP), 11 to 16 (PPPPPP), and 31 to 36 (APPPPP). In terms of domain architecture, WH2 spans 56 to 73 (GRSALLADIQQGTRLRKV). Asymmetric dimethylarginine is present on Arg-57. The RLRK motif lies at 69 to 72 (RLRK). The residue at position 161 (Ser-161) is a Phosphoserine. Over residues 176–203 (PVPPRPSVPAPPPPTPPPPPPPPLPPAS) the composition is skewed to pro residues. Phosphoserine is present on Ser-211. Pro residues predominate over residues 212-246 (PPAPPTKVNPSVVPPPLPCAPPLPPPPPTPPPLPP). The span at 247–262 (ASALSDKAVRPQLAPL) shows a compositional bias: low complexity. 2 stretches are compositionally biased toward pro residues: residues 263–278 (HLPP…PPCG) and 296–312 (PPAP…PPLP). Position 392 is a phosphoserine (Ser-392). The span at 392–405 (SPTTELSSKSQQPG) shows a compositional bias: polar residues. The segment covering 415–439 (AIDDFESKFTFHSMEDFPPPDEYKP) has biased composition (basic and acidic residues). A WASP-binding motif motif is present at residues 424–448 (TFHSMEDFPPPDEYKPCQKIYPSKV).

Interacts with WASL, and monomeric and filamentous actin. In terms of tissue distribution, isoform 1 is expressed in brain and testis and isoform 2 is expressed only in brain (at protein level).

The protein resides in the cytoplasm. Its function is as follows. May be a regulator of cytoskeletal organization (Potential). May have a role in spermatogenesis. This chain is WAS/WASL-interacting protein family member 3 (Wipf3), found in Mus musculus (Mouse).